The primary structure comprises 258 residues: Triosephosphate isomerase (258 aa).

Substrate is bound at residue 9–11 (NWK). His105 acts as the Electrophile in catalysis. Catalysis depends on Glu176, which acts as the Proton acceptor. Positions 182 and 214 each coordinate substrate.

Belongs to the triosephosphate isomerase family. As to quaternary structure, homodimer.

The protein localises to the cytoplasm. The enzyme catalyses D-glyceraldehyde 3-phosphate = dihydroxyacetone phosphate. The protein operates within carbohydrate biosynthesis; gluconeogenesis. Its pathway is carbohydrate degradation; glycolysis; D-glyceraldehyde 3-phosphate from glycerone phosphate: step 1/1. In terms of biological role, involved in the gluconeogenesis. Catalyzes stereospecifically the conversion of dihydroxyacetone phosphate (DHAP) to D-glyceraldehyde-3-phosphate (G3P). In Mycoplasmopsis agalactiae (strain NCTC 10123 / CIP 59.7 / PG2) (Mycoplasma agalactiae), this protein is Triosephosphate isomerase.